A 210-amino-acid polypeptide reads, in one-letter code: Thymidylate kinase (210 aa).

Residue 11–18 (GLEGAGKS) coordinates ATP.

This sequence belongs to the thymidylate kinase family.

The catalysed reaction is dTMP + ATP = dTDP + ADP. Its function is as follows. Phosphorylation of dTMP to form dTDP in both de novo and salvage pathways of dTTP synthesis. This chain is Thymidylate kinase, found in Vibrio parahaemolyticus serotype O3:K6 (strain RIMD 2210633).